Consider the following 37-residue polypeptide: Large ribosomal subunit protein bL36 (37 aa).

The protein belongs to the bacterial ribosomal protein bL36 family.

The polypeptide is Large ribosomal subunit protein bL36 (Shewanella baltica (strain OS223)).